We begin with the raw amino-acid sequence, 1252 residues long: DNA-directed RNA polymerase subunit beta (1252 aa).

The protein belongs to the RNA polymerase beta chain family. The RNAP catalytic core consists of 2 alpha, 1 beta, 1 beta' and 1 omega subunit. When a sigma factor is associated with the core the holoenzyme is formed, which can initiate transcription.

The enzyme catalyses RNA(n) + a ribonucleoside 5'-triphosphate = RNA(n+1) + diphosphate. Its function is as follows. DNA-dependent RNA polymerase catalyzes the transcription of DNA into RNA using the four ribonucleoside triphosphates as substrates. The chain is DNA-directed RNA polymerase subunit beta from Chlamydia trachomatis serovar D (strain ATCC VR-885 / DSM 19411 / UW-3/Cx).